The sequence spans 249 residues: Putative SAP domain-containing protein 049L (249 aa).

Basic and acidic residues-rich tracts occupy residues 1-12, 22-38, and 95-107; these read MAAPKAEGEDKP, PKPETKEVKKPKSKEFC, and KKAESSDDKKLDE. The tract at residues 1–110 is disordered; it reads MAAPKAEGED…DDKKLDEATG (110 aa). Positions 119-153 constitute an SAP domain; it reads LSKLTIQTLKGMCKTRNLKISGNKAALVQRLIEAD.

In Frog virus 3 (isolate Goorha) (FV-3), this protein is Putative SAP domain-containing protein 049L.